Consider the following 275-residue polypeptide: 2,3,4,5-tetrahydropyridine-2,6-dicarboxylate N-succinyltransferase (275 aa).

Residues R104 and D141 each contribute to the substrate site.

The protein belongs to the transferase hexapeptide repeat family. In terms of assembly, homotrimer.

The protein resides in the cytoplasm. It catalyses the reaction (S)-2,3,4,5-tetrahydrodipicolinate + succinyl-CoA + H2O = (S)-2-succinylamino-6-oxoheptanedioate + CoA. It functions in the pathway amino-acid biosynthesis; L-lysine biosynthesis via DAP pathway; LL-2,6-diaminopimelate from (S)-tetrahydrodipicolinate (succinylase route): step 1/3. This is 2,3,4,5-tetrahydropyridine-2,6-dicarboxylate N-succinyltransferase from Actinobacillus succinogenes (strain ATCC 55618 / DSM 22257 / CCUG 43843 / 130Z).